A 35-amino-acid chain; its full sequence is Kappa-theraphotoxin-Gr1b (35 aa).

Cystine bridges form between Cys2-Cys16, Cys9-Cys21, and Cys15-Cys28. Residues 4 to 6 are involved in active face; the sequence is YLF.

The protein belongs to the neurotoxin 10 (Hwtx-1) family. 09 (HaTx) subfamily. As to expression, expressed by the venom gland.

Its subcellular location is the secreted. Functionally, inhibitor of voltage-gated potassium channels. Inhibits Kv2.1/KCNB1 channels, by shifting activation of the channel to more depolarized voltages. The toxin binding sites may be situated on the S3-S4 extracellular linker of the channel. One, two, three or four toxin molecules may bind the Kv2.1/KCNB1 channel. May need to partition into the membrane in order to bind to the channel. Antibacterial activity is not observed. In Grammostola rosea (Chilean rose tarantula), this protein is Kappa-theraphotoxin-Gr1b.